The primary structure comprises 121 residues: Alpha-endosulfine (121 aa).

The tract at residues 1–53 (MSQKQEEENPAEETGEEKQDTQEKEGILPERAEEAKLKAKYPSLGQKPGGSDF) is disordered. Serine 2 bears the N-acetylserine mark. Serine 2 bears the Phosphoserine mark. Positions 16 to 37 (EEKQDTQEKEGILPERAEEAKL) are enriched in basic and acidic residues. Threonine 21 bears the Phosphothreonine mark. The residue at position 43 (serine 43) is a Phosphoserine. At serine 67 the chain carries Phosphoserine; by GWL. Residues 79-121 (NKQLPSAGPDKNLVTGDHIPTPQDLPQRKSSLVTSKLAGGQVE) form a disordered region. Serine 109 is subject to Phosphoserine; by PKA.

This sequence belongs to the endosulfine family. As to quaternary structure, interacts (when phosphorylated at Ser-67) with PPP2R2D. Interacts with ABCC8. Interacts with SNCA; interaction is disrupted when phosphorylated at Ser-109. In terms of processing, phosphorylation at Ser-67 by GWL during mitosis is essential for interaction with PPP2R2D (PR55-delta) and subsequent inactivation of PP2A. Phosphorylated by PKA. In terms of tissue distribution, widely expressed with high levels in skeletal muscle and brain and lower levels in the pancreas.

The protein localises to the cytoplasm. Protein phosphatase inhibitor that specifically inhibits protein phosphatase 2A (PP2A) during mitosis. When phosphorylated at Ser-67 during mitosis, specifically interacts with PPP2R2D (PR55-delta) and inhibits its activity, leading to inactivation of PP2A, an essential condition to keep cyclin-B1-CDK1 activity high during M phase. Also acts as a stimulator of insulin secretion by interacting with sulfonylurea receptor (ABCC8), thereby preventing sulfonylurea from binding to its receptor and reducing K(ATP) channel currents. In Homo sapiens (Human), this protein is Alpha-endosulfine (ENSA).